Here is a 61-residue protein sequence, read N- to C-terminus: Lens epithelial cell protein LEP503 (61 aa).

As to expression, preferentially expressed in the lens epithelial cells.

The chain is Lens epithelial cell protein LEP503 (Lenep) from Rattus norvegicus (Rat).